The chain runs to 375 residues: 23S rRNA (uracil(747)-C(5))-methyltransferase RlmC (375 aa).

The [4Fe-4S] cluster site is built by C3, C11, C14, and C87. 4 residues coordinate S-adenosyl-L-methionine: Q212, F241, E262, and N307. C334 serves as the catalytic Nucleophile.

This sequence belongs to the class I-like SAM-binding methyltransferase superfamily. RNA M5U methyltransferase family. RlmC subfamily.

The enzyme catalyses uridine(747) in 23S rRNA + S-adenosyl-L-methionine = 5-methyluridine(747) in 23S rRNA + S-adenosyl-L-homocysteine + H(+). In terms of biological role, catalyzes the formation of 5-methyl-uridine at position 747 (m5U747) in 23S rRNA. This Escherichia coli O127:H6 (strain E2348/69 / EPEC) protein is 23S rRNA (uracil(747)-C(5))-methyltransferase RlmC.